Here is a 138-residue protein sequence, read N- to C-terminus: Acidic phospholipase A2 6 (138 aa).

Residues 1-16 form the signal peptide; that stretch reads MRTLWIMAVLLVGVEG. Disulfide bonds link C42–C131, C44–C60, C59–C111, C65–C138, C66–C104, C73–C97, and C91–C102. Residues Y43, G45, and G47 each contribute to the Ca(2+) site. Residue H63 is part of the active site. Residue D64 coordinates Ca(2+). The active site involves D105.

This sequence belongs to the phospholipase A2 family. Group II subfamily. D49 sub-subfamily. Homodimer. Requires Ca(2+) as cofactor. In terms of tissue distribution, expressed by the venom gland.

It localises to the secreted. The catalysed reaction is a 1,2-diacyl-sn-glycero-3-phosphocholine + H2O = a 1-acyl-sn-glycero-3-phosphocholine + a fatty acid + H(+). Functionally, snake venom phospholipase A2 (PLA2) that has high lipolytic activity. PLA2 catalyzes the calcium-dependent hydrolysis of the 2-acyl groups in 3-sn-phosphoglycerides. This Craspedocephalus gramineus (Bamboo pit viper) protein is Acidic phospholipase A2 6.